The following is a 235-amino-acid chain: NADH-quinone oxidoreductase subunit C (235 aa).

It belongs to the complex I 30 kDa subunit family. In terms of assembly, NDH-1 is composed of 14 different subunits. Subunits NuoB, C, D, E, F, and G constitute the peripheral sector of the complex.

The protein resides in the cell membrane. It carries out the reaction a quinone + NADH + 5 H(+)(in) = a quinol + NAD(+) + 4 H(+)(out). In terms of biological role, NDH-1 shuttles electrons from NADH, via FMN and iron-sulfur (Fe-S) centers, to quinones in the respiratory chain. The immediate electron acceptor for the enzyme in this species is believed to be a menaquinone. Couples the redox reaction to proton translocation (for every two electrons transferred, four hydrogen ions are translocated across the cytoplasmic membrane), and thus conserves the redox energy in a proton gradient. This Mycobacterium avium (strain 104) protein is NADH-quinone oxidoreductase subunit C.